The primary structure comprises 520 residues: Probable DNA ligase (520 aa).

Position 213 (Glu-213) interacts with ATP. The N6-AMP-lysine intermediate role is filled by Lys-215. The ATP site is built by Arg-220, Arg-235, Glu-264, Phe-300, Arg-372, and Lys-378.

Belongs to the ATP-dependent DNA ligase family. Mg(2+) serves as cofactor.

The catalysed reaction is ATP + (deoxyribonucleotide)n-3'-hydroxyl + 5'-phospho-(deoxyribonucleotide)m = (deoxyribonucleotide)n+m + AMP + diphosphate.. DNA ligase that seals nicks in double-stranded DNA during DNA replication, DNA recombination and DNA repair. The sequence is that of Probable DNA ligase from Mycobacterium sp. (strain JLS).